A 481-amino-acid polypeptide reads, in one-letter code: Lincomycin resistance protein (481 aa).

A run of 14 helical transmembrane segments spans residues 30 to 50 (WVTL…VTVV), 67 to 87 (QLTW…MVGG), 99 to 119 (LLFG…APNL), 127 to 147 (FGQG…IACS), 162 to 182 (VASV…QLFS), 185 to 205 (WIFL…LLLV), 215 to 235 (PVDL…IFGV), 245 to 265 (LPLA…FVAV), 285 to 305 (LVAN…FFLL), 318 to 338 (IEAG…CVLV), 340 to 360 (GLIE…LAGP), 374 to 394 (LLTS…GLVA), 421 to 441 (LGGA…HLGG), and 446 to 466 (FTVA…AVLA).

Belongs to the major facilitator superfamily. TCR/Tet family.

It localises to the cell membrane. Proton-dependent transporter. May mediate the efflux of lincomycin. This is Lincomycin resistance protein (lmrA) from Streptomyces lincolnensis.